An 80-amino-acid chain; its full sequence is MARKKASLDFEQSLADLQALVERLENGELSLEESLAAFEQGIALTRDCQGALAQAEQKVQILLERDGELAAQPFDAEPDV.

This sequence belongs to the XseB family. As to quaternary structure, heterooligomer composed of large and small subunits.

It localises to the cytoplasm. It catalyses the reaction Exonucleolytic cleavage in either 5'- to 3'- or 3'- to 5'-direction to yield nucleoside 5'-phosphates.. Bidirectionally degrades single-stranded DNA into large acid-insoluble oligonucleotides, which are then degraded further into small acid-soluble oligonucleotides. This Pseudomonas putida (strain GB-1) protein is Exodeoxyribonuclease 7 small subunit.